We begin with the raw amino-acid sequence, 113 residues long: MNRSDIFEKLANLEANINQINSDMGNLKKLTVEVIEENVALQIENENLKTLIDKEEKSKAVENGKKLPKKQPLRSKDNLAMLYKEGFHICNGELFGKHRKGDDCLFCLEVLSE.

4 residues coordinate Zn(2+): histidine 88, cysteine 90, cysteine 104, and cysteine 107.

The protein belongs to the YabA family. As to quaternary structure, homotetramer. Interacts with both DnaA and DnaN, acting as a bridge between these two proteins. It depends on Zn(2+) as a cofactor.

The protein localises to the cytoplasm. It is found in the nucleoid. Functionally, involved in control of chromosome replication initiation. Inhibits the cooperative binding of DnaA to the oriC region, thus negatively regulating initiation of chromosome replication. Inhibits the ability of DnaA-ATP to form a helix on DNA; does not disassemble preformed DnaA-DNA helices. Decreases the residence time of DnaA on the chromosome at its binding sites (oriC, replication forks and promoter-binding sites). Tethers DnaA to the replication machinery via the DNA polymerase beta sliding clamp subunit (dnaN). Associates with oriC and other DnaA targets on the chromosome in a DnaA-dependent manner. In Staphylococcus saprophyticus subsp. saprophyticus (strain ATCC 15305 / DSM 20229 / NCIMB 8711 / NCTC 7292 / S-41), this protein is Replication initiation control protein YabA.